A 354-amino-acid chain; its full sequence is Methionine import ATP-binding protein MetN 2 (354 aa).

The 245-residue stretch at 6–250 (IELKNISVHF…PQKPLTKEFI (245 aa)) folds into the ABC transporter domain. 42–49 (GYSGAGKS) is an ATP binding site.

The protein belongs to the ABC transporter superfamily. Methionine importer (TC 3.A.1.24) family. The complex is composed of two ATP-binding proteins (MetN), two transmembrane proteins (MetI) and a solute-binding protein (MetQ).

It is found in the cell membrane. It catalyses the reaction L-methionine(out) + ATP + H2O = L-methionine(in) + ADP + phosphate + H(+). The enzyme catalyses D-methionine(out) + ATP + H2O = D-methionine(in) + ADP + phosphate + H(+). Its function is as follows. Part of the ABC transporter complex MetNIQ involved in methionine import. Responsible for energy coupling to the transport system. This chain is Methionine import ATP-binding protein MetN 2, found in Oenococcus oeni (strain ATCC BAA-331 / PSU-1).